A 524-amino-acid chain; its full sequence is Bifunctional purine biosynthesis protein PurH (524 aa).

Positions 1–149 (MSDPLIKRAL…KNNESVTVLT (149 aa)) constitute an MGS-like domain.

Belongs to the PurH family.

The enzyme catalyses (6R)-10-formyltetrahydrofolate + 5-amino-1-(5-phospho-beta-D-ribosyl)imidazole-4-carboxamide = 5-formamido-1-(5-phospho-D-ribosyl)imidazole-4-carboxamide + (6S)-5,6,7,8-tetrahydrofolate. The catalysed reaction is IMP + H2O = 5-formamido-1-(5-phospho-D-ribosyl)imidazole-4-carboxamide. The protein operates within purine metabolism; IMP biosynthesis via de novo pathway; 5-formamido-1-(5-phospho-D-ribosyl)imidazole-4-carboxamide from 5-amino-1-(5-phospho-D-ribosyl)imidazole-4-carboxamide (10-formyl THF route): step 1/1. Its pathway is purine metabolism; IMP biosynthesis via de novo pathway; IMP from 5-formamido-1-(5-phospho-D-ribosyl)imidazole-4-carboxamide: step 1/1. The chain is Bifunctional purine biosynthesis protein PurH from Chlorobium luteolum (strain DSM 273 / BCRC 81028 / 2530) (Pelodictyon luteolum).